A 278-amino-acid chain; its full sequence is MNTTGSAFVIGASGIGRACALAFARRGVSGLVVADVDLQAAESLAAECRAEAGSAGTADALGCAEATRVDVADERSVELAVSFARRVLGRVDYCVNSAGIGVKLANEIADASPVEFEAMFQVNVKGTFLVTRAVSALMKTQDPVPVLRDSPGRGTTRGCIVILGSAAAFAATPKMVQYTTAKHAVLGLTKSAALDNAAHGIRVNSVCPSWVDTPMVRRALQDVPELEQTIRTSVPMGRIALAEEVADAVMFLCSPGASYATGCNMILDGGTTLTTHLG.

NADP(+)-binding residues include isoleucine 15, aspartate 70, arginine 132, tyrosine 178, lysine 182, valine 211, and threonine 213. Catalysis depends on tyrosine 178, which acts as the Proton donor. Residue lysine 182 is the Lowers pKa of active site Tyr of the active site.

The protein belongs to the short-chain dehydrogenases/reductases (SDR) family.

It functions in the pathway polyketide biosynthesis. Functionally, short-chain dehydrogenase; part of the gene cluster that mediates the biosynthesis of pyriculol and pyriculariol, two heptaketides that induce lesion formation upon application on rice leaves but are dispensable for pathogenicity. The highly reducing polyketide synthase synthesizes the heptaketide backbone of pyriculol and pyriculariol. Pyriculol and pyriculariol contain several hydroxyl moieties and double bonds, so it can be assumed that several reduction steps occur during biosynthesis. These reactions could be executed by PKS19 itself or partly by the tailoring enzymes OXR1, OXR2, RED1, RED2 or RED3, identified within the cluster. The FAD-linked oxidoreductase OXR1 is the only tailoring enzyme for which the function has been determined yet, and is involved in the oxidation of dihydropyriculol and dihydropyriculariol into pyriculol and pyriculariol, respectively. This is Short-chain dehydrogenase RED2 from Pyricularia oryzae (strain 70-15 / ATCC MYA-4617 / FGSC 8958) (Rice blast fungus).